A 397-amino-acid chain; its full sequence is DnaJ homolog subfamily A member 4 (397 aa).

A J domain is found at 4 to 70; the sequence is ETQYYDILGV…RDVYDQGGEQ (67 aa). Ser18 carries the post-translational modification Phosphoserine. A CR-type zinc finger spans residues 122–206; the sequence is GVTKKLALQK…CSGAKVIREK (85 aa). 8 residues coordinate Zn(2+): Cys135, Cys138, Cys151, Cys154, Cys178, Cys181, Cys194, and Cys197. CXXCXGXG motif repeat units follow at residues 135–142, 151–158, 178–185, and 194–201; these read CEKCEGVG, CPLCKGRG, CIECKGQG, and CESCSGAK. Cys394 carries the cysteine methyl ester modification. Residue Cys394 is the site of S-farnesyl cysteine attachment. Positions 395 to 397 are cleaved as a propeptide — removed in mature form; the sequence is QTA.

It localises to the membrane. This chain is DnaJ homolog subfamily A member 4 (DNAJA4), found in Homo sapiens (Human).